Reading from the N-terminus, the 159-residue chain is Transcriptional repressor NrdR (159 aa).

A zinc finger lies at 3–34; the sequence is CPFCGSDNTSVKDSRAAEDDTAVRRRRVCESC. Residues 49 to 139 enclose the ATP-cone domain; that stretch reads IIVVKRDGKR…VYRDFKDPSD (91 aa).

Belongs to the NrdR family. Requires Zn(2+) as cofactor.

Negatively regulates transcription of bacterial ribonucleotide reductase nrd genes and operons by binding to NrdR-boxes. The protein is Transcriptional repressor NrdR of Hyphomonas neptunium (strain ATCC 15444).